Consider the following 103-residue polypeptide: Pyrimidine/purine nucleoside phosphorylase (103 aa).

Belongs to the nucleoside phosphorylase PpnP family.

The enzyme catalyses a purine D-ribonucleoside + phosphate = a purine nucleobase + alpha-D-ribose 1-phosphate. It carries out the reaction adenosine + phosphate = alpha-D-ribose 1-phosphate + adenine. It catalyses the reaction cytidine + phosphate = cytosine + alpha-D-ribose 1-phosphate. The catalysed reaction is guanosine + phosphate = alpha-D-ribose 1-phosphate + guanine. The enzyme catalyses inosine + phosphate = alpha-D-ribose 1-phosphate + hypoxanthine. It carries out the reaction thymidine + phosphate = 2-deoxy-alpha-D-ribose 1-phosphate + thymine. It catalyses the reaction uridine + phosphate = alpha-D-ribose 1-phosphate + uracil. The catalysed reaction is xanthosine + phosphate = alpha-D-ribose 1-phosphate + xanthine. Catalyzes the phosphorolysis of diverse nucleosides, yielding D-ribose 1-phosphate and the respective free bases. Can use uridine, adenosine, guanosine, cytidine, thymidine, inosine and xanthosine as substrates. Also catalyzes the reverse reactions. The chain is Pyrimidine/purine nucleoside phosphorylase from Shewanella baltica (strain OS195).